The sequence spans 108 residues: MPKKDRAQEAPSRDVPKPEEGQTICVVKKMLGGDHLVVLCMDGKERLARIPGKIRKKMWMREGDVVLVGIWDFQPNRCDILYKYGNDEIKRLVNENIISREVIDQLRG.

Positions 11–85 constitute an S1-like domain; sequence PSRDVPKPEE…NRCDILYKYG (75 aa).

The protein belongs to the eIF-1A family.

Its function is as follows. Seems to be required for maximal rate of protein biosynthesis. Enhances ribosome dissociation into subunits and stabilizes the binding of the initiator Met-tRNA(I) to 40 S ribosomal subunits. In Saccharolobus islandicus (strain Y.N.15.51 / Yellowstone #2) (Sulfolobus islandicus), this protein is Translation initiation factor 1A (eIF1A).